The chain runs to 117 residues: Immunity protein BC_0921 (117 aa).

As to quaternary structure, probably interacts with cognate toxin BC_0920 but not with other non-cognate toxins. The interaction inhibits the toxic activity of BC_0920.

The protein resides in the cytoplasm. Functionally, immunity component of an LXG toxin-immunity module. Neutralizes the RNase activity of cognate toxin BC_0920. Probably does not have immunity protein activity on other toxins with the LXG domain. This is Immunity protein BC_0921 from Bacillus cereus (strain ATCC 14579 / DSM 31 / CCUG 7414 / JCM 2152 / NBRC 15305 / NCIMB 9373 / NCTC 2599 / NRRL B-3711).